A 396-amino-acid chain; its full sequence is Probable sugar efflux transporter (396 aa).

Over 1–14 the chain is Cytoplasmic; it reads MTTNTVSRKVAWLR. The chain crosses the membrane as a helical span at residues 15–35; the sequence is VVTLAVAAFIFNTTEFVPVGL. Topologically, residues 36 to 49 are periplasmic; sequence LSDIAQSFHMQTAQ. Residues 50–70 form a helical membrane-spanning segment; the sequence is VGIMLTIYAWVVALMSLPFML. The Cytoplasmic portion of the chain corresponds to 71–80; sequence MTSQVERRKL. The chain crosses the membrane as a helical span at residues 81-101; that stretch reads LICLFVVFIASHVLSFLSWSF. A topological domain (periplasmic) is located at residue Thr-102. A helical membrane pass occupies residues 103-123; the sequence is VLVISRIGVAFAHAIFWSITA. Residues 124-135 lie on the Cytoplasmic side of the membrane; that stretch reads SLAIRMAPAGKR. The helical transmembrane segment at 136 to 156 threads the bilayer; the sequence is AQALSLIATGTALAMVLGLPL. Residues 157–169 lie on the Periplasmic side of the membrane; sequence GRIVGQYFGWRMT. A helical transmembrane segment spans residues 170–190; sequence FFAIGIGALVTLLCLIKLLPL. Topologically, residues 191 to 208 are cytoplasmic; it reads LPSEHSGSLKSLPLLFRR. A helical membrane pass occupies residues 209-229; it reads PALMSIYLLTVVVVTAHYTAY. Over 230–245 the chain is Periplasmic; sequence SYIEPFVQNIAGFSAN. Residues 246-266 form a helical membrane-spanning segment; it reads FATALLLLLGGAGIIGSVIFG. At 267 to 274 the chain is on the cytoplasmic side; sequence KLGNQYAS. A helical transmembrane segment spans residues 275–295; sequence ALVSTAIALLLVCLALLLPAA. Residues 296–298 are Periplasmic-facing; that stretch reads NSE. The chain crosses the membrane as a helical span at residues 299–319; the sequence is IHLGVLSIFWGIAMMIIGLGM. Topologically, residues 320–332 are cytoplasmic; it reads QVKVLALAPDATD. Residues 333 to 353 form a helical membrane-spanning segment; it reads VAMALFSGIFNIGIGAGALVG. Residues 354 to 363 are Periplasmic-facing; that stretch reads NQVSLHWSMS. The chain crosses the membrane as a helical span at residues 364-384; the sequence is MIGYVGAVPAFAALIWSIIIF. The Cytoplasmic segment spans residues 385–396; it reads RRWPVTLEEQTQ.

It belongs to the major facilitator superfamily. SotB (TC 2.A.1.2) family.

It localises to the cell inner membrane. In terms of biological role, involved in the efflux of sugars. The physiological role may be the reduction of the intracellular concentration of toxic sugars or sugar metabolites. In Shigella flexneri, this protein is Probable sugar efflux transporter.